Reading from the N-terminus, the 287-residue chain is Probable endonuclease 4 (287 aa).

The Zn(2+) site is built by H69, H109, E144, D178, H181, H215, D228, H230, and E260.

This sequence belongs to the AP endonuclease 2 family. Requires Zn(2+) as cofactor.

It carries out the reaction Endonucleolytic cleavage to 5'-phosphooligonucleotide end-products.. Its function is as follows. Endonuclease IV plays a role in DNA repair. It cleaves phosphodiester bonds at apurinic or apyrimidinic (AP) sites, generating a 3'-hydroxyl group and a 5'-terminal sugar phosphate. The polypeptide is Probable endonuclease 4 (Thermotoga petrophila (strain ATCC BAA-488 / DSM 13995 / JCM 10881 / RKU-1)).